The sequence spans 403 residues: Leu/Ile/Val-binding protein homolog 8 (403 aa).

Residues 1–26 form the signal peptide; the sequence is MRLSRLLIGASLGVALSSTVFTAALA.

This sequence belongs to the leucine-binding protein family.

Component of an amino-acid transport system. The protein is Leu/Ile/Val-binding protein homolog 8 of Brucella abortus (strain 2308).